A 382-amino-acid polypeptide reads, in one-letter code: Lipid-A-disaccharide synthase (382 aa).

This sequence belongs to the LpxB family.

It carries out the reaction 2-N,3-O-bis[(3R)-3-hydroxytetradecanoyl]-alpha-D-glucosaminyl 1-phosphate + UDP-2-N,3-O-bis[(3R)-3-hydroxytetradecanoyl]-alpha-D-glucosamine = lipid A disaccharide (E. coli) + UDP + H(+). It catalyses the reaction a lipid X + a UDP-2-N,3-O-bis[(3R)-3-hydroxyacyl]-alpha-D-glucosamine = a lipid A disaccharide + UDP + H(+). Its pathway is glycolipid biosynthesis; lipid IV(A) biosynthesis; lipid IV(A) from (3R)-3-hydroxytetradecanoyl-[acyl-carrier-protein] and UDP-N-acetyl-alpha-D-glucosamine: step 5/6. Its function is as follows. Condensation of UDP-2,3-diacylglucosamine and 2,3-diacylglucosamine-1-phosphate to form lipid A disaccharide, a precursor of lipid A, a phosphorylated glycolipid that anchors the lipopolysaccharide to the outer membrane of the cell. This chain is Lipid-A-disaccharide synthase, found in Salmonella agona (strain SL483).